A 156-amino-acid polypeptide reads, in one-letter code: Small ribosomal subunit protein uS7 (156 aa).

The protein belongs to the universal ribosomal protein uS7 family. In terms of assembly, part of the 30S ribosomal subunit. Contacts proteins S9 and S11.

One of the primary rRNA binding proteins, it binds directly to 16S rRNA where it nucleates assembly of the head domain of the 30S subunit. Is located at the subunit interface close to the decoding center, probably blocks exit of the E-site tRNA. This Bradyrhizobium diazoefficiens (strain JCM 10833 / BCRC 13528 / IAM 13628 / NBRC 14792 / USDA 110) protein is Small ribosomal subunit protein uS7.